The sequence spans 178 residues: Large ribosomal subunit protein uL6 (178 aa).

This sequence belongs to the universal ribosomal protein uL6 family. Part of the 50S ribosomal subunit.

Its function is as follows. This protein binds to the 23S rRNA, and is important in its secondary structure. It is located near the subunit interface in the base of the L7/L12 stalk, and near the tRNA binding site of the peptidyltransferase center. The sequence is that of Large ribosomal subunit protein uL6 from Nitratiruptor sp. (strain SB155-2).